The following is a 140-amino-acid chain: Probable glycine cleavage system H protein 3 (140 aa).

The region spanning 29-110 (VVSIGVTDLG…PYDSWIVKIR (82 aa)) is the Lipoyl-binding domain. Lys-70 bears the N6-lipoyllysine mark.

The protein belongs to the GcvH family. The glycine cleavage system is composed of four proteins: P, T, L and H. Requires (R)-lipoate as cofactor.

The glycine cleavage system catalyzes the degradation of glycine. The H protein shuttles the methylamine group of glycine from the P protein to the T protein. The sequence is that of Probable glycine cleavage system H protein 3 from Saccharolobus solfataricus (strain ATCC 35092 / DSM 1617 / JCM 11322 / P2) (Sulfolobus solfataricus).